A 193-amino-acid polypeptide reads, in one-letter code: Potassium-transporting ATPase KdpC subunit (193 aa).

A helical membrane pass occupies residues 10-30 (AAIIIFSVLTGVIYPALVTVI).

Belongs to the KdpC family. The system is composed of three essential subunits: KdpA, KdpB and KdpC.

Its subcellular location is the cell membrane. Part of the high-affinity ATP-driven potassium transport (or Kdp) system, which catalyzes the hydrolysis of ATP coupled with the electrogenic transport of potassium into the cytoplasm. This subunit acts as a catalytic chaperone that increases the ATP-binding affinity of the ATP-hydrolyzing subunit KdpB by the formation of a transient KdpB/KdpC/ATP ternary complex. In Herpetosiphon aurantiacus (strain ATCC 23779 / DSM 785 / 114-95), this protein is Potassium-transporting ATPase KdpC subunit.